The following is a 365-amino-acid chain: Carbohydrate sulfotransferase 10 (365 aa).

The Cytoplasmic segment spans residues 1-6 (MRRHWL). Residues 7 to 27 (LVGACGWVLLILMFVSKFINF) form a helical; Signal-anchor for type II membrane protein membrane-spanning segment. Residues 28–356 (SFRIPGDYAG…RYQGDFSLFD (329 aa)) lie on the Lumenal side of the membrane. N-linked (GlcNAc...) asparagine glycosylation is found at N99 and N104. 3'-phosphoadenylyl sulfate is bound by residues 132 to 138 (PKVGNTQ) and 194 to 202 (RDPFERLIS). The N-linked (GlcNAc...) asparagine glycan is linked to N325.

It belongs to the sulfotransferase 2 family.

It localises to the golgi apparatus membrane. Catalyzes the transfer of sulfate to position 3 of terminal glucuronic acid of both protein- and lipid-linked oligosaccharides. Participates in biosynthesis of HNK-1 carbohydrate structure, a sulfated glucuronyl-lactosaminyl residue carried by many neural recognition molecules. The protein is Carbohydrate sulfotransferase 10 (chst10) of Danio rerio (Zebrafish).